The chain runs to 432 residues: Ribosomal protein uS12 methylthiotransferase RimO (432 aa).

One can recognise an MTTase N-terminal domain in the interval 4 to 120 (HNVFLLSLGC…LLQAIGAQYR (117 aa)). Positions 13, 49, 83, 144, 148, and 151 each coordinate [4Fe-4S] cluster. The Radical SAM core domain maps to 130–359 (LTPPHISYLK…MELQETIAKE (230 aa)). Residues 362-429 (QLFEGKELTV…AYELHGTITA (68 aa)) enclose the TRAM domain.

Belongs to the methylthiotransferase family. RimO subfamily. [4Fe-4S] cluster is required as a cofactor.

The protein localises to the cytoplasm. The catalysed reaction is L-aspartate(89)-[ribosomal protein uS12]-hydrogen + (sulfur carrier)-SH + AH2 + 2 S-adenosyl-L-methionine = 3-methylsulfanyl-L-aspartate(89)-[ribosomal protein uS12]-hydrogen + (sulfur carrier)-H + 5'-deoxyadenosine + L-methionine + A + S-adenosyl-L-homocysteine + 2 H(+). Functionally, catalyzes the methylthiolation of an aspartic acid residue of ribosomal protein uS12. This is Ribosomal protein uS12 methylthiotransferase RimO from Chlorobium phaeobacteroides (strain DSM 266 / SMG 266 / 2430).